We begin with the raw amino-acid sequence, 358 residues long: Mesaconyl-CoA hydratase (358 aa).

The MaoC-like domain maps to 44-148; the sequence is AHDPGLRLTH…TSSSRPQYGI (105 aa).

It belongs to the enoyl-CoA hydratase/isomerase family.

It carries out the reaction (2R,3S)-beta-methylmalyl-CoA = 2-methylfumaryl-CoA + H2O. In terms of biological role, involved in the methylaspartate cycle. Catalyzes the reversible hydration of mesaconyl-CoA (2-methylfumaryl-CoA) to yield beta-methylmalyl-CoA ((2R,3S)-beta-methylmalyl-CoA). The sequence is that of Mesaconyl-CoA hydratase from Haloarcula marismortui (strain ATCC 43049 / DSM 3752 / JCM 8966 / VKM B-1809) (Halobacterium marismortui).